Consider the following 710-residue polypeptide: Early transcription factor 82 kDa subunit (710 aa).

The protein belongs to the poxviridae VETF large subunit family. Heterodimer of a 70 kDa and a 82 kDa subunit. Part of the early transcription complex composed of ETF, RAP94/OPG109, and the DNA-directed RNA polymerase.

Its subcellular location is the virion. Acts with RNA polymerase to initiate transcription from early gene promoters. Is recruited by the RPO-associated protein of 94 kDa RAP94/OPG109 to form the early transcription complex, which also contains the core RNA polymerase. ETF heterodimer binds to early gene promoters. The sequence is that of Early transcription factor 82 kDa subunit (OPG133) from Variola virus (isolate Human/India/Ind3/1967) (VARV).